The following is a 338-amino-acid chain: STEAP1 protein (338 aa).

2 consecutive transmembrane segments (helical) span residues 70 to 90 (WHLPIKIAAIVSSLTFLYTLL) and 118 to 138 (PMVSITLLALVYLPGVIAAIV). In terms of domain architecture, Ferric oxidoreductase spans 117–264 (LPMVSITLLA…TLGIVSLLLG (148 aa)). Residues Q139 and R160 each contribute to the FAD site. 4 helical membrane-spanning segments follow: residues 163–183 (FGLLSFFFAVLHAVYSLSYPM), 217–237 (IYVSLGIVTLAILALLAVTSI), 252–272 (IQSTLGIVSLLLGTIHALIFA), and 290–310 (FMIAVFLPTVVLICKVILLLP). Heme b is bound at residue H174. Residues S236 and Q253 each coordinate FAD. H267 is a binding site for heme b.

The protein belongs to the STEAP family. Homotrimer. The cofactor is FAD. Heme b is required as a cofactor.

It is found in the endosome membrane. The protein resides in the cell membrane. Its function is as follows. Does not function as a metalloreductase due to the absence of binding sites for the electron-donating substrate NADPH. The polypeptide is STEAP1 protein (STEAP1) (Sus scrofa (Pig)).